Here is a 675-residue protein sequence, read N- to C-terminus: Alpha-1,4-glucan:maltose-1-phosphate maltosyltransferase 1 (675 aa).

Alpha-maltose 1-phosphate is bound by residues K264, Q324, and D359. D394 (nucleophile) is an active-site residue. An alpha-maltose 1-phosphate-binding site is contributed by N395. The Proton donor role is filled by E423. Position 534–535 (534–535) interacts with alpha-maltose 1-phosphate; that stretch reads KY.

Belongs to the glycosyl hydrolase 13 family. GlgE subfamily. As to quaternary structure, homodimer.

The enzyme catalyses alpha-maltose 1-phosphate + [(1-&gt;4)-alpha-D-glucosyl](n) = [(1-&gt;4)-alpha-D-glucosyl](n+2) + phosphate. Its activity is regulated as follows. Is competitively inhibited by alpha-, beta- and gamma-cyclodextrins (cyclic maltooligosaccharides), unlike GlgE from M.tuberculosis. Its function is as follows. Maltosyltransferase that uses maltose 1-phosphate (M1P) as the sugar donor to elongate linear or branched alpha-(1-&gt;4)-glucans. Maltooligosaccharides with a degree of polymerization (DP) superior or equal to 4 are efficient acceptors, with DP6 being optimal in the GlgE-catalyzed polymerization with M1P. Is specific for the alpha-anomer of M1P as substrate, since the beta-anomer of M1P gives no activity. Alpha-D-glucose 1-phosphate cannot serve as a donor substrate, but alpha-maltosyl fluoride is an efficient donor in vitro. Exhibits an alpha-retaining catalytic mechanism, with evidence that maltooligosaccharide acceptors are extended at their non-reducing ends. Is also able to catalyze the reverse reaction in vitro, releasing M1P from glycogen or maltoheptaose in the presence of inorganic phosphate. Also catalyzes disproportionation reactions through maltosyl transfer between maltooligosaccharides. Is probably involved in a branched alpha-glucan biosynthetic pathway from trehalose, together with TreS, Mak and GlgB. This is Alpha-1,4-glucan:maltose-1-phosphate maltosyltransferase 1 (glgE1) from Streptomyces coelicolor (strain ATCC BAA-471 / A3(2) / M145).